The primary structure comprises 185 residues: Ribosome-recycling factor (185 aa).

Belongs to the RRF family.

The protein localises to the cytoplasm. Responsible for the release of ribosomes from messenger RNA at the termination of protein biosynthesis. May increase the efficiency of translation by recycling ribosomes from one round of translation to another. This is Ribosome-recycling factor from Dichelobacter nodosus (strain VCS1703A).